A 266-amino-acid polypeptide reads, in one-letter code: Ciliary microtubule inner protein 4 (266 aa).

2 stretches are compositionally biased toward polar residues: residues 1 to 15 (MELS…LTRT) and 24 to 38 (QDMN…SLDN). Residues 1 to 124 (MELSHRQGTT…SPEQRTVPLS (124 aa)) are disordered. Low complexity predominate over residues 47–63 (LSQSPLGSSLGQGYLET). Basic and acidic residues predominate over residues 81–102 (HPEDLKKGASRSSSRDARETFR).

In terms of tissue distribution, only detected in testis, in the spermatids and sperm within the seminiferous tubules (at protein level).

It localises to the cytoplasmic vesicle. It is found in the secretory vesicle. Its subcellular location is the acrosome. The protein localises to the cell projection. The protein resides in the cilium. It localises to the flagellum. Seems to be associated with spermiogenesis but is not essential for sperm development and male fertility. The sequence is that of Ciliary microtubule inner protein 4 (Cimip4) from Mus musculus (Mouse).